We begin with the raw amino-acid sequence, 283 residues long: Galactooligosaccharides transport system permease protein GanQ (283 aa).

Helical transmembrane passes span 13–33 (LLFSYLLLAFMAVIIVYPLLW), 82–102 (ISLFTMAGSLLCVTFTAYAFS), 115–135 (LFLLLQMIPQFSALIALFVLA), 137–157 (ILGMINSHWLLILLYIGGLIP), 188–208 (IFFQIILPLSKPMAAVVAMNG), and 248–268 (TTFAAGALLISIPVAVIFIML). One can recognise an ABC transmembrane type-1 domain in the interval 76 to 268 (YVNSMKISLF…IPVAVIFIML (193 aa)).

This sequence belongs to the binding-protein-dependent transport system permease family. As to quaternary structure, the complex is composed of two ATP-binding proteins (MsmX), two transmembrane proteins (GanP and GanQ) and a solute-binding protein (GanS).

It is found in the cell membrane. Its function is as follows. Involved in galactan degradation. Part of the ABC transporter complex GanPQS involved in the uptake of galactooligosaccharides. Responsible for the translocation of the substrate across the membrane. This is Galactooligosaccharides transport system permease protein GanQ (ganQ) from Bacillus subtilis (strain 168).